The sequence spans 152 residues: Ribosome maturation factor RimP (152 aa).

The protein belongs to the RimP family.

The protein resides in the cytoplasm. Its function is as follows. Required for maturation of 30S ribosomal subunits. The sequence is that of Ribosome maturation factor RimP from Clostridium beijerinckii (strain ATCC 51743 / NCIMB 8052) (Clostridium acetobutylicum).